The primary structure comprises 142 residues: Hemoglobin subunit alpha-1 (142 aa).

The Globin domain occupies 2-142 (KLSADDKHNV…VGYVLASKYR (141 aa)). Histidine 59 is an O2 binding site. Residue histidine 88 participates in heme b binding.

The protein belongs to the globin family. As to quaternary structure, major hemoglobin is a heterotetramer of two alpha-1 chains and two beta-1 chains. Red blood cells.

Involved in oxygen transport from the lung to the various peripheral tissues. In Triturus cristatus (Great crested newt), this protein is Hemoglobin subunit alpha-1.